A 344-amino-acid chain; its full sequence is Phenylalanine--tRNA ligase alpha subunit (344 aa).

Residue glutamate 256 coordinates Mg(2+).

This sequence belongs to the class-II aminoacyl-tRNA synthetase family. Phe-tRNA synthetase alpha subunit type 1 subfamily. Tetramer of two alpha and two beta subunits. Requires Mg(2+) as cofactor.

It is found in the cytoplasm. The enzyme catalyses tRNA(Phe) + L-phenylalanine + ATP = L-phenylalanyl-tRNA(Phe) + AMP + diphosphate + H(+). This Geobacillus thermodenitrificans (strain NG80-2) protein is Phenylalanine--tRNA ligase alpha subunit.